The primary structure comprises 237 residues: CD209 antigen-like protein D (237 aa).

Residues 1–54 (MSDSMESKTQQVVIPEDEECLMSGTRYSDISSRLQTKFGIKSLAEYTKQSRNPL) are Cytoplasmic-facing. Residues 55–75 (VLQLLSFLFLAGLLLIILILV) form a helical; Signal-anchor for type II membrane protein membrane-spanning segment. Residues 76–237 (SKVPSSEVQN…KVSTSSCTTK (162 aa)) are Extracellular-facing. The cysteines at positions 106 and 117 are disulfide-linked. The C-type lectin domain maps to 112–227 (FFNGSCYFFS…CDKLLFWICK (116 aa)). 2 N-linked (GlcNAc...) asparagine glycosylation sites follow: Asn-114 and Asn-129. 2 cysteine pairs are disulfide-bonded: Cys-134/Cys-226 and Cys-205/Cys-218. Ca(2+) contacts are provided by Glu-196, Asn-198, Glu-203, Asn-214, and Asp-215.

Its subcellular location is the membrane. Its function is as follows. Probable pathogen-recognition receptor. May mediate the endocytosis of pathogens which are subsequently degraded in lysosomal compartments. May recognize in a calcium-dependent manner high mannose N-linked oligosaccharides in a variety of pathogen antigens. This chain is CD209 antigen-like protein D (Cd209d), found in Mus musculus (Mouse).